The chain runs to 22 residues: Fuctinin-2 (22 aa).

The disordered stretch occupies residues 1–22 (ELPGLPKGEKEQQEAIEHIDEV). The segment covering 7-22 (KGEKEQQEAIEHIDEV) has biased composition (basic and acidic residues).

It to human SET/PHAPII protein. In terms of assembly, oligomer.

The protein localises to the cytoplasm. Its function is as follows. Has a role in the physiological regulation of fucosylation processes. The chain is Fuctinin-2 from Rattus norvegicus (Rat).